The following is a 385-amino-acid chain: 1-deoxy-D-xylulose 5-phosphate reductoisomerase 1 (385 aa).

6 residues coordinate NADPH: Thr-11, Gly-12, Ser-13, Ile-14, Asn-39, and Asn-122. Lys-123 is a binding site for 1-deoxy-D-xylulose 5-phosphate. An NADPH-binding site is contributed by Glu-124. Position 148 (Asp-148) interacts with Mn(2+). Residues Ser-149, Glu-150, Ser-174, and His-197 each coordinate 1-deoxy-D-xylulose 5-phosphate. Glu-150 provides a ligand contact to Mn(2+). Gly-203 is an NADPH binding site. Residues Ser-210, Asn-215, Lys-216, and Glu-219 each contribute to the 1-deoxy-D-xylulose 5-phosphate site. Glu-219 is a Mn(2+) binding site.

The protein belongs to the DXR family. Mg(2+) is required as a cofactor. It depends on Mn(2+) as a cofactor.

It catalyses the reaction 2-C-methyl-D-erythritol 4-phosphate + NADP(+) = 1-deoxy-D-xylulose 5-phosphate + NADPH + H(+). It participates in isoprenoid biosynthesis; isopentenyl diphosphate biosynthesis via DXP pathway; isopentenyl diphosphate from 1-deoxy-D-xylulose 5-phosphate: step 1/6. Functionally, catalyzes the NADPH-dependent rearrangement and reduction of 1-deoxy-D-xylulose-5-phosphate (DXP) to 2-C-methyl-D-erythritol 4-phosphate (MEP). The protein is 1-deoxy-D-xylulose 5-phosphate reductoisomerase 1 of Bacillus anthracis.